The sequence spans 228 residues: Deoxyribose-phosphate aldolase (228 aa).

Residue Asp-96 is the Proton donor/acceptor of the active site. The active-site Schiff-base intermediate with acetaldehyde is the Lys-157. Lys-185 functions as the Proton donor/acceptor in the catalytic mechanism.

Belongs to the DeoC/FbaB aldolase family. DeoC type 1 subfamily.

The protein localises to the cytoplasm. The catalysed reaction is 2-deoxy-D-ribose 5-phosphate = D-glyceraldehyde 3-phosphate + acetaldehyde. Its pathway is carbohydrate degradation; 2-deoxy-D-ribose 1-phosphate degradation; D-glyceraldehyde 3-phosphate and acetaldehyde from 2-deoxy-alpha-D-ribose 1-phosphate: step 2/2. Catalyzes a reversible aldol reaction between acetaldehyde and D-glyceraldehyde 3-phosphate to generate 2-deoxy-D-ribose 5-phosphate. This Cyanothece sp. (strain PCC 7425 / ATCC 29141) protein is Deoxyribose-phosphate aldolase.